The chain runs to 283 residues: Thymidylate synthase (283 aa).

R22 contacts dUMP. C160 functions as the Nucleophile in the catalytic mechanism. DUMP is bound by residues 180–183 (RSCD), N191, and 221–223 (HIY). D183 serves as a coordination point for (6R)-5,10-methylene-5,6,7,8-tetrahydrofolate. S282 is a (6R)-5,10-methylene-5,6,7,8-tetrahydrofolate binding site.

It belongs to the thymidylate synthase family. Bacterial-type ThyA subfamily. As to quaternary structure, homodimer.

It localises to the cytoplasm. It carries out the reaction dUMP + (6R)-5,10-methylene-5,6,7,8-tetrahydrofolate = 7,8-dihydrofolate + dTMP. Its pathway is pyrimidine metabolism; dTTP biosynthesis. Catalyzes the reductive methylation of 2'-deoxyuridine-5'-monophosphate (dUMP) to 2'-deoxythymidine-5'-monophosphate (dTMP) while utilizing 5,10-methylenetetrahydrofolate (mTHF) as the methyl donor and reductant in the reaction, yielding dihydrofolate (DHF) as a by-product. This enzymatic reaction provides an intracellular de novo source of dTMP, an essential precursor for DNA biosynthesis. The protein is Thymidylate synthase of Shewanella loihica (strain ATCC BAA-1088 / PV-4).